An 82-amino-acid chain; its full sequence is Small, acid-soluble spore protein gamma-type (82 aa).

2 stretches are compositionally biased toward polar residues: residues 1 to 24 (MANS…ASGQ) and 32 to 50 (ASET…SAAG). The tract at residues 1-82 (MANSNNKTNA…SAEQNKQQNS (82 aa)) is disordered. Repeats lie at residues 19–45 (QSAS…KQNQ) and 46–72 (QSAA…QQNQ). Low complexity predominate over residues 69–82 (QQNQSAEQNKQQNS).

This sequence belongs to the gamma-type SASP family.

Functionally, SASP are bound to spore DNA. They are double-stranded DNA-binding proteins that cause DNA to change to an a-like conformation. They protect the DNA backbone from chemical and enzymatic cleavage and are thus involved in dormant spore's high resistance to UV light. The protein is Small, acid-soluble spore protein gamma-type of Bacillus subtilis.